The sequence spans 1059 residues: Endo-1,4-beta-xylanase A (1059 aa).

Positions 1 to 30 (MQVRKRRGLLDVSTAVLVGILAGFLGVVLA) are cleaved as a signal peptide. The segment at 47-199 (SSLETVLALS…LDKVQVLAPK (153 aa)) is A-1. Residues 200–354 (ESGPKVIYET…DDVKIVDTTS (155 aa)) form an A-2 region. Residues 364 to 692 (EKEIPALKEV…KLAYWAIVAP (329 aa)) enclose the GH10 domain. Glu502 functions as the Proton donor in the catalytic mechanism. Glu608 functions as the Nucleophile in the catalytic mechanism. CBM-cenC domains follow at residues 700 to 870 (KESR…LEGI) and 871 to 1059 (MVAT…RLIK).

Belongs to the glycosyl hydrolase 10 (cellulase F) family.

The enzyme catalyses Endohydrolysis of (1-&gt;4)-beta-D-xylosidic linkages in xylans.. This Thermotoga maritima (strain ATCC 43589 / DSM 3109 / JCM 10099 / NBRC 100826 / MSB8) protein is Endo-1,4-beta-xylanase A (xynA).